A 24-amino-acid polypeptide reads, in one-letter code: N-acyl-L-amino acid amidohydrolase (24 aa).

The protein belongs to the peptidase M20 family. Homotetramer. Requires Co(2+) as cofactor.

The enzyme catalyses an N-acyl-L-amino acid + H2O = an L-alpha-amino acid + a carboxylate. The catalysed reaction is an N-acetyl-L-cysteine-S-conjugate + H2O = an S-substituted L-cysteine + acetate. The polypeptide is N-acyl-L-amino acid amidohydrolase (Parageobacillus thermoglucosidasius (Geobacillus thermoglucosidasius)).